Consider the following 68-residue polypeptide: UPF0435 protein SAB1812c (68 aa).

The protein belongs to the UPF0435 family.

This Staphylococcus aureus (strain bovine RF122 / ET3-1) protein is UPF0435 protein SAB1812c.